The following is a 129-amino-acid chain: L-ectoine synthase (129 aa).

The protein belongs to the ectoine synthase family.

The enzyme catalyses (2S)-4-acetamido-2-aminobutanoate = L-ectoine + H2O. It participates in amine and polyamine biosynthesis; ectoine biosynthesis; L-ectoine from L-aspartate 4-semialdehyde: step 3/3. Catalyzes the circularization of gamma-N-acetyl-alpha,gamma-diaminobutyric acid (ADABA) to ectoine (1,4,5,6-tetrahydro-2-methyl-4-pyrimidine carboxylic acid), which is an excellent osmoprotectant. This chain is L-ectoine synthase, found in Halalkalibacterium halodurans (strain ATCC BAA-125 / DSM 18197 / FERM 7344 / JCM 9153 / C-125) (Bacillus halodurans).